The following is a 183-amino-acid chain: Translocon-associated protein subunit beta (183 aa).

An N-terminal signal peptide occupies residues 1 to 17 (MRLLSFVVLALFAVTQA). Residues 18–149 (EEGARLLASK…DRRFSPHFLD (132 aa)) are Lumenal-facing. Residues asparagine 88 and asparagine 104 are each glycosylated (N-linked (GlcNAc...) asparagine). The chain crosses the membrane as a helical span at residues 150–169 (WAAFGVMTLPSIGIPLLLWY). The Cytoplasmic portion of the chain corresponds to 170–183 (SSKRKYDTPKTKKN).

It belongs to the TRAP-beta family. As to quaternary structure, heterotetramer of TRAP-alpha, TRAP-beta, TRAP-delta and TRAP-gamma. Interacts with STING1.

It is found in the endoplasmic reticulum membrane. TRAP proteins are part of a complex whose function is to bind calcium to the ER membrane and thereby regulate the retention of ER resident proteins. This Homo sapiens (Human) protein is Translocon-associated protein subunit beta (SSR2).